A 163-amino-acid polypeptide reads, in one-letter code: Allophycocyanin alpha-B chain (163 aa).

Asn-71 is subject to N4-methylasparagine. Cys-81 contacts (2R,3E)-phycocyanobilin.

Belongs to the phycobiliprotein family. Contains one covalently linked bilin chromophore.

Its subcellular location is the plastid. It is found in the chloroplast thylakoid membrane. Allophycocyanin is a photosynthetic bile pigment-protein complex with maximum absorption at approximately 650 nanometers. This Cyanidium caldarium (Red alga) protein is Allophycocyanin alpha-B chain (apcD).